We begin with the raw amino-acid sequence, 294 residues long: NAD kinase (294 aa).

Aspartate 74 functions as the Proton acceptor in the catalytic mechanism. Residues 74 to 75 (DG), 148 to 149 (NE), histidine 159, arginine 176, aspartate 178, 189 to 194 (TAYSLS), and glutamine 249 each bind NAD(+).

This sequence belongs to the NAD kinase family. The cofactor is a divalent metal cation.

The protein localises to the cytoplasm. It carries out the reaction NAD(+) + ATP = ADP + NADP(+) + H(+). Functionally, involved in the regulation of the intracellular balance of NAD and NADP, and is a key enzyme in the biosynthesis of NADP. Catalyzes specifically the phosphorylation on 2'-hydroxyl of the adenosine moiety of NAD to yield NADP. The chain is NAD kinase from Vibrio vulnificus (strain CMCP6).